The primary structure comprises 148 residues: Outer envelope pore protein 16-1, chloroplastic (148 aa).

The tract at residues 2-73 (PSSTFSGTVS…EHALKKLCKE (72 aa)) is contains 4 beta strands. A run of 3 helical transmembrane segments spans residues 75-91 (VYWGAAGGVYIGTEYGI), 102-118 (NAMLAGAATGAVLSAVG), and 125-142 (IVIDAILGGALATASQFV).

The protein belongs to the Tim17/Tim22/Tim23 family. Plastid outer envelope porin OEP16 (TC 1.B.30) subfamily. In terms of assembly, homodimer and oligomers in membrane. Forms large complexes including TOC33, pPORA and OEP161 during pPORA import into plastids at the plastid envelope membrane. Expressed predominantly in leaves and cotyledons.

The protein resides in the plastid. The protein localises to the chloroplast outer membrane. It is found in the etioplast membrane. Its activity is regulated as follows. Stimulated by GTP. Its function is as follows. Voltage-dependent high-conductance channel with a slight cation-selectivity; selective for amino acids but excludes triosephosphates or uncharged sugars. Non-essential amino acid-selective channel protein and translocation pore for NADPH:protochlorophyllide oxidoreductase A (PORA) and possibly PORB. Involved in PORA precursor (pPORA) import and thus confers photoprotection onto etiolated seedlings during greening. The protein is Outer envelope pore protein 16-1, chloroplastic (OEP161) of Arabidopsis thaliana (Mouse-ear cress).